The sequence spans 583 residues: MAPSLGSGSTRILLIVSLLLCLRQQAVVDAAIVEHTFHVGNLTVERLGQRQVITAVNGQFPGPKVEARNGDTLLVRVVNNSPYNITIHWHGVLQRLSAWADGPAMVTQCPILPGSGAGSSYTYRFNVTGQEGTLWWHAHVSFLRATVYGALLIRPRPGVPYPFPAPHAEHTLLLGEWWNASATLVDVERQAFLTGGQPANSVALTINGMPGLSHAHKEMHHLRVARGNTYLLRLVNAALNYQLFFKVAAHNFTVVAVDACYTDPYHTDVIVIAPGQTVDALMHAGAAPGRRYYVAAQVYQSIANATYSATARALLRYDDDAKDAAKTIIMSPRMPVLNDSATAQRFYGSLTGLLRDGKPTVPQRVDTRMVVTYGLAIAPCLPAQTLCNRTRGSLAASMNNVSFQLPATMSLLEASRSRSSGVYTRDFPDRPPVMFDFTNAAAVNRNMSLMVTSKGTRVKALRYNETVEVVLQNTAVLGTENHPLHLHGFNFYVLAQGTGNYYYLIRKKKIRKNLVNPQQRNTIAVPPGGWAVIRFTADNPGVWLMHCHLEAHLPFGLAMAFDVQDGPTPDAMLPPPPNDYPPC.

A signal peptide spans 1–30 (MAPSLGSGSTRILLIVSLLLCLRQQAVVDA). Plastocyanin-like domains follow at residues 38–158 (HVGN…PRPG) and 168–320 (AEHT…YDDD). 2 N-linked (GlcNAc...) asparagine glycosylation sites follow: Asn41 and Asn84. Residues His88 and His90 each coordinate Cu cation. A glycan (N-linked (GlcNAc...) asparagine) is linked at Asn126. 2 residues coordinate Cu cation: His137 and His139. N-linked (GlcNAc...) asparagine glycans are attached at residues Asn179, Asn251, Asn304, Asn338, Asn388, Asn400, Asn446, and Asn464. The Plastocyanin-like 3 domain maps to 426-567 (DFPDRPPVMF…AMAFDVQDGP (142 aa)). Cu cation is bound by residues His482, His485, His487, His546, Cys547, His548, and His552.

Belongs to the multicopper oxidase family. Requires Cu cation as cofactor.

The protein localises to the secreted. Its subcellular location is the extracellular space. The protein resides in the apoplast. The enzyme catalyses 4 hydroquinone + O2 = 4 benzosemiquinone + 2 H2O. Functionally, lignin degradation and detoxification of lignin-derived products. This chain is Laccase-14 (LAC14), found in Oryza sativa subsp. japonica (Rice).